The primary structure comprises 599 residues: Sulfite reductase [NADPH] flavoprotein alpha-component (599 aa).

In terms of domain architecture, Flavodoxin-like spans 64 to 202 (VTLISASQTG…AASEWRACVV (139 aa)). FMN contacts are provided by residues 70–75 (SQTGNA), 117–120 (STQG), and 153–162 (LGDTSYEFFC). An FAD-binding FR-type domain is found at 234 to 448 (DAPLTATLSV…IEHNDNFRLP (215 aa)). FAD-binding positions include threonine 322, alanine 356, 386–389 (RLYS), 404–406 (TVG), tyrosine 410, and 419–422 (GGAS). NADP(+) is bound by residues 519-520 (SR), 525-529 (KIYVQ), and aspartate 561. Residue tyrosine 599 coordinates FAD.

This sequence belongs to the NADPH-dependent sulphite reductase flavoprotein subunit CysJ family. The protein in the N-terminal section; belongs to the flavodoxin family. It in the C-terminal section; belongs to the flavoprotein pyridine nucleotide cytochrome reductase family. As to quaternary structure, alpha(8)-beta(8). The alpha component is a flavoprotein, the beta component is a hemoprotein. It depends on FAD as a cofactor. The cofactor is FMN.

It catalyses the reaction hydrogen sulfide + 3 NADP(+) + 3 H2O = sulfite + 3 NADPH + 4 H(+). It functions in the pathway sulfur metabolism; hydrogen sulfide biosynthesis; hydrogen sulfide from sulfite (NADPH route): step 1/1. Its function is as follows. Component of the sulfite reductase complex that catalyzes the 6-electron reduction of sulfite to sulfide. This is one of several activities required for the biosynthesis of L-cysteine from sulfate. The flavoprotein component catalyzes the electron flow from NADPH -&gt; FAD -&gt; FMN to the hemoprotein component. This chain is Sulfite reductase [NADPH] flavoprotein alpha-component, found in Salmonella typhi.